Reading from the N-terminus, the 606-residue chain is MQKMPSQILNDGSSVSLNSASMNMANTPNSITVKTAYNGQIIITTINKNISYEELCYEIRNICRFPLDQPFTIKWVDEENDPCTISTKMELDEAIRLYEMNFDSQLVIHVFPNVPQAPGLSCDGEDRSIYRRGARRWRKLYRVNGHIFQAKRFNRRAFCAYCQDRIWGLGRQGFKCIQCKLLVHKKCHKLVQKHCTDQPEPLVKERAEESSDPIPVPLPPLPYEAMSGGAEACETHDHAHIVAPPPPEDPLEPGTQRQYSLNDFELIRVIGRGSYAKVLMVELRRTRRIYAMKVIKKALVTDDEDIDWVQTEKHVFETASNHPFLVGLHSCFQTPSRLFFVIEFVRGGDLMYHMQRQRRLPEEHARFYAAEISLALNFLHEKGIIYRDLKLDNVLLDHEGHIKLTDYGMCKEGIRPGDTTSTFCGTPNYIAPEILRGEDYGFSVDWWALGVLLYEMLAGRSPFDLAGASENPDQNTEDYLFQVILEKTIRIPRSLSVRAASVLKGFLNKNPADRLGCHRESAFMDIVSHPFFKNMDWELLERKQVTPPFKPRLDSDRDLANFPPEFTGEAVQLTPDDDHVIDNIDQSEFEGFEYVNPLLMSLEDCV.

Residues 30-113 (SITVKTAYNG…SQLVIHVFPN (84 aa)) enclose the PB1 domain. The Phorbol-ester/DAG-type zinc-finger motif lies at 145–195 (GHIFQAKRFNRRAFCAYCQDRIWGLGRQGFKCIQCKLLVHKKCHKLVQKHC). The 269-residue stretch at 264–532 (FELIRVIGRG…FMDIVSHPFF (269 aa)) folds into the Protein kinase domain. Residues 270-278 (IGRGSYAKV) and Lys-293 contribute to the ATP site. Catalysis depends on Asp-388, which acts as the Proton acceptor. In terms of domain architecture, AGC-kinase C-terminal spans 533-604 (KNMDWELLER…VNPLLMSLED (72 aa)).

This sequence belongs to the protein kinase superfamily. AGC Ser/Thr protein kinase family. PKC subfamily. Interacts with baz; the interaction is required for apical localization of aPKC in neuroblasts and epithelial cells. Interacts with Dap160; the interaction promotes aPKC apical localization and kinase activity. Interacts with and phosphorylates l(2)gl and yrt. Interacts with crb and ref(2)P. Forms a complex with baz, fz and Patj. As to expression, expressed in the testis. In spermatid cysts, localizes near the tips of spermatid flagellar axonemes (at protein level). Detectable in freshly laid eggs before onset of zygotic transcription so is deposited in the egg during oogenesis. At the cellular blastoderm stage, present in all cells except the pole cells. During gastrulation, strongly expressed in tissues undergoing morphogenetic movements such as invaginating mesoderm, proctodeum and cephalic furrow. Strongly expressed in neuroblasts.

The protein resides in the cytoplasm. It is found in the cell cortex. The protein localises to the apicolateral cell membrane. The enzyme catalyses L-seryl-[protein] + ATP = O-phospho-L-seryl-[protein] + ADP + H(+). The catalysed reaction is L-threonyl-[protein] + ATP = O-phospho-L-threonyl-[protein] + ADP + H(+). In terms of biological role, serine/threonine protein kinase which is required for apico-basal cell polarity in the germ line as well as in epithelial and neural precursor cells, for epithelial planar cell polarity and for cell proliferation. During oocyte development, required for the posterior translocation of oocyte specification factors and for the posterior establishment of the microtubule organizing center within the presumptive oocyte. Phosphorylates l(2)gl which restricts l(2)gl activity to the oocyte posterior and regulates posterior enrichment of par-1, leading to establishment of correct oocyte polarity. Essential for apical localization of l(2)gl and par-6 in neuroblasts and for exclusion of mira from the apical cortex. Phosphorylates baz which is required for targeting of baz to the postsynaptic region where it is involved in actin organization, and for apical exclusion of baz which is necessary for establishment of the apical/lateral border in epithelial cells. Phosphorylates yrt which prevents its premature apical localization and is necessary for correct epithelial cell polarization. Required for the establishment of mitotic spindle orientation during symmetric division of epithelial cells and for apical exclusion of raps/Pins. Involved in symmetric adherens junction positioning during embryogenesis. Required for polarization of the spermatid cyst which is necessary for sperm differentiation. Required for stimulation of the Toll signaling pathway which activates Dif and dl and plays a role in innate immunity. Plays a role in memory enhancement. The protein is Atypical protein kinase C of Drosophila melanogaster (Fruit fly).